The chain runs to 62 residues: Large ribosomal subunit protein uL29 (62 aa).

Belongs to the universal ribosomal protein uL29 family.

This Desulfosudis oleivorans (strain DSM 6200 / JCM 39069 / Hxd3) (Desulfococcus oleovorans) protein is Large ribosomal subunit protein uL29.